The sequence spans 146 residues: Ribonuclease H (146 aa).

Residues 4-145 enclose the RNase H type-1 domain; it reads ELNKVVIYTD…ADILARSQIS (142 aa). 4 residues coordinate Mg(2+): Asp13, Glu51, Asp73, and Asp137.

The protein belongs to the RNase H family. As to quaternary structure, monomer. The cofactor is Mg(2+).

The protein localises to the cytoplasm. The catalysed reaction is Endonucleolytic cleavage to 5'-phosphomonoester.. Functionally, endonuclease that specifically degrades the RNA of RNA-DNA hybrids. The chain is Ribonuclease H from Ehrlichia canis (strain Jake).